We begin with the raw amino-acid sequence, 544 residues long: POTE ankyrin domain family member B2 (544 aa).

5 ANK repeats span residues 135–167, 168–200, 201–233, 234–266, and 267–299; these read QKRT…VLDN, KKRT…IQDE, YGNT…SKNK, CGLT…ALDR, and YGRT…SQDL. Positions 332-457 are disordered; sequence SSENSNPEQD…NTGISQDEIL (126 aa). Composition is skewed to basic and acidic residues over residues 340-355 and 364-375; these read QDLK…RLKV and MSQEPEINKDCD. Polar residues predominate over residues 439 to 457; that stretch reads TQKQLSEEQNTGISQDEIL.

This sequence belongs to the POTE family.

The protein is POTE ankyrin domain family member B2 (POTEB2) of Homo sapiens (Human).